Consider the following 31-residue polypeptide: GCIATGSVCTLSKGCCTKNCGWNFKCNPPNQ.

Cystine bridges form between Cys-2-Cys-16, Cys-9-Cys-20, and Cys-15-Cys-26. A 4-hydroxyproline mark is found at Pro-28 and Pro-29.

This sequence belongs to the nemertide family. Confined to the epidermis and to the mucus layer.

Its subcellular location is the secreted. In terms of biological role, toxin with similar potency against both insect and mammalian sodium channels (Nav). Delays the inactivation of most Nav channels tested (B.germanica (BgNav1); EC(50)=87.2 nM, human Nav1.1/SCN1A; EC(50)=125.8 nM, rat Nav1.2/SCN2A; EC(50)=97.9 nM, rat Nav1.3/SCN3A; EC(50)=127.7 nM, rat Nav1.4/SCN4A; EC(50)=1150.3 nM, human Nav1.5/SCN5A; EC(50)=149.2 nM, mouse Nav1.6/SCN8A; EC(50)=1361.8 nM, human Nav1.9/SCN9A; EC(50)=1296.7 nM). Inactivation is completely prevented by a concentration of 1 uM, resulting in sustained, non-inactivating current. In addition, the toxin significantly enhances the recovery from inactivation, and the open state is not required for the toxin to interact with the channel. In vivo, injection into brine shrimp (Artemia salina) stops movement or causes death after 24 hours (EC(50)=2.9 uM). This is Nemertide alpha-2 from Lineus longissimus (Bootlace worm).